The chain runs to 212 residues: Peptide methionine sulfoxide reductase MsrA (212 aa).

Residues 1 to 14 (MSSIDKTQRITQSD) are compositionally biased toward polar residues. The disordered stretch occupies residues 1-21 (MSSIDKTQRITQSDALPGRST). Residue C52 is part of the active site.

The protein belongs to the MsrA Met sulfoxide reductase family.

It catalyses the reaction L-methionyl-[protein] + [thioredoxin]-disulfide + H2O = L-methionyl-(S)-S-oxide-[protein] + [thioredoxin]-dithiol. The catalysed reaction is [thioredoxin]-disulfide + L-methionine + H2O = L-methionine (S)-S-oxide + [thioredoxin]-dithiol. In terms of biological role, has an important function as a repair enzyme for proteins that have been inactivated by oxidation. Catalyzes the reversible oxidation-reduction of methionine sulfoxide in proteins to methionine. This Pectobacterium carotovorum subsp. carotovorum (strain PC1) protein is Peptide methionine sulfoxide reductase MsrA.